The sequence spans 282 residues: Pantothenate synthetase (282 aa).

ATP is bound at residue 28–35; sequence MGALHSGH. The Proton donor role is filled by His-35. Gln-59 is a binding site for (R)-pantoate. Gln-59 provides a ligand contact to beta-alanine. 146 to 149 contacts ATP; that stretch reads GEKD. (R)-pantoate is bound at residue Gln-152. ATP-binding positions include Val-175 and 183 to 186; that span reads LSSR.

This sequence belongs to the pantothenate synthetase family. As to quaternary structure, homodimer.

The protein localises to the cytoplasm. The catalysed reaction is (R)-pantoate + beta-alanine + ATP = (R)-pantothenate + AMP + diphosphate + H(+). The protein operates within cofactor biosynthesis; (R)-pantothenate biosynthesis; (R)-pantothenate from (R)-pantoate and beta-alanine: step 1/1. Functionally, catalyzes the condensation of pantoate with beta-alanine in an ATP-dependent reaction via a pantoyl-adenylate intermediate. In Salinispora arenicola (strain CNS-205), this protein is Pantothenate synthetase.